The sequence spans 253 residues: Ubiquinone/menaquinone biosynthesis C-methyltransferase UbiE (253 aa).

Residues threonine 76, aspartate 97, 125–126 (NA), and serine 142 contribute to the S-adenosyl-L-methionine site.

It belongs to the class I-like SAM-binding methyltransferase superfamily. MenG/UbiE family.

The catalysed reaction is a 2-demethylmenaquinol + S-adenosyl-L-methionine = a menaquinol + S-adenosyl-L-homocysteine + H(+). The enzyme catalyses a 2-methoxy-6-(all-trans-polyprenyl)benzene-1,4-diol + S-adenosyl-L-methionine = a 5-methoxy-2-methyl-3-(all-trans-polyprenyl)benzene-1,4-diol + S-adenosyl-L-homocysteine + H(+). It functions in the pathway quinol/quinone metabolism; menaquinone biosynthesis; menaquinol from 1,4-dihydroxy-2-naphthoate: step 2/2. Its pathway is cofactor biosynthesis; ubiquinone biosynthesis. In terms of biological role, methyltransferase required for the conversion of demethylmenaquinol (DMKH2) to menaquinol (MKH2) and the conversion of 2-polyprenyl-6-methoxy-1,4-benzoquinol (DDMQH2) to 2-polyprenyl-3-methyl-6-methoxy-1,4-benzoquinol (DMQH2). The chain is Ubiquinone/menaquinone biosynthesis C-methyltransferase UbiE from Xanthomonas axonopodis pv. citri (strain 306).